The following is a 330-amino-acid chain: Flotillin-like protein FloA (330 aa).

2 helical membrane-spanning segments follow: residues 6–26 and 28–48; these read LFLL…FTFV and VMLW…TLIG.

It belongs to the flotillin-like FloA family. Homooligomerizes.

The protein resides in the cell membrane. The protein localises to the membrane raft. In terms of biological role, found in functional membrane microdomains (FMM) that may be equivalent to eukaryotic membrane rafts. FMMs are highly dynamic and increase in number as cells age. Flotillins are thought to be important factors in membrane fluidity. The polypeptide is Flotillin-like protein FloA (Bacillus licheniformis (strain ATCC 14580 / DSM 13 / JCM 2505 / CCUG 7422 / NBRC 12200 / NCIMB 9375 / NCTC 10341 / NRRL NRS-1264 / Gibson 46)).